Here is a 505-residue protein sequence, read N- to C-terminus: Glutamate--tRNA ligase (505 aa).

The 'HIGH' region signature appears at 12-22 (PSPTGDPHVGT). Positions 253-257 (KLSKR) match the 'KMSKS' region motif. Residue Lys256 participates in ATP binding.

Belongs to the class-I aminoacyl-tRNA synthetase family. Glutamate--tRNA ligase type 1 subfamily. As to quaternary structure, monomer.

It localises to the cytoplasm. The enzyme catalyses tRNA(Glu) + L-glutamate + ATP = L-glutamyl-tRNA(Glu) + AMP + diphosphate. Its function is as follows. Catalyzes the attachment of glutamate to tRNA(Glu) in a two-step reaction: glutamate is first activated by ATP to form Glu-AMP and then transferred to the acceptor end of tRNA(Glu). The sequence is that of Glutamate--tRNA ligase from Chlamydia abortus (strain DSM 27085 / S26/3) (Chlamydophila abortus).